The following is a 254-amino-acid chain: Wall-associated protein (254 aa).

Positions 25-46 are disordered; the sequence is DRVEPKEEPPKVPQAPKRDLKP.

The protein localises to the secreted. It is found in the cell wall. This Geobacillus stearothermophilus (Bacillus stearothermophilus) protein is Wall-associated protein (wapA').